The sequence spans 93 residues: Cobalt transport protein CbiN (93 aa).

2 helical membrane-spanning segments follow: residues 5–25 (LMLL…NHGG) and 63–83 (LLFT…LGYC).

It belongs to the CbiN family. Forms an energy-coupling factor (ECF) transporter complex composed of an ATP-binding protein (A component, CbiO), a transmembrane protein (T component, CbiQ) and 2 possible substrate-capture proteins (S components, CbiM and CbiN) of unknown stoichimetry.

The protein resides in the cell inner membrane. Its pathway is cofactor biosynthesis; adenosylcobalamin biosynthesis. In terms of biological role, part of the energy-coupling factor (ECF) transporter complex CbiMNOQ involved in cobalt import. This is Cobalt transport protein CbiN from Salmonella choleraesuis (strain SC-B67).